A 123-amino-acid chain; its full sequence is Large ribosomal subunit protein bL12 (123 aa).

It belongs to the bacterial ribosomal protein bL12 family. Homodimer. Part of the ribosomal stalk of the 50S ribosomal subunit. Forms a multimeric L10(L12)X complex, where L10 forms an elongated spine to which 2 to 4 L12 dimers bind in a sequential fashion. Binds GTP-bound translation factors.

In terms of biological role, forms part of the ribosomal stalk which helps the ribosome interact with GTP-bound translation factors. Is thus essential for accurate translation. The polypeptide is Large ribosomal subunit protein bL12 (Rhodopseudomonas palustris (strain HaA2)).